A 351-amino-acid polypeptide reads, in one-letter code: UDP-3-O-acylglucosamine N-acyltransferase (351 aa).

Residue histidine 257 is the Proton acceptor of the active site.

It belongs to the transferase hexapeptide repeat family. LpxD subfamily. In terms of assembly, homotrimer.

It catalyses the reaction a UDP-3-O-[(3R)-3-hydroxyacyl]-alpha-D-glucosamine + a (3R)-hydroxyacyl-[ACP] = a UDP-2-N,3-O-bis[(3R)-3-hydroxyacyl]-alpha-D-glucosamine + holo-[ACP] + H(+). The protein operates within bacterial outer membrane biogenesis; LPS lipid A biosynthesis. Its function is as follows. Catalyzes the N-acylation of UDP-3-O-acylglucosamine using 3-hydroxyacyl-ACP as the acyl donor. Is involved in the biosynthesis of lipid A, a phosphorylated glycolipid that anchors the lipopolysaccharide to the outer membrane of the cell. This chain is UDP-3-O-acylglucosamine N-acyltransferase, found in Methylorubrum extorquens (strain PA1) (Methylobacterium extorquens).